The primary structure comprises 299 residues: Fluorinase (299 aa).

S-adenosyl-L-methionine is bound by residues D15, 20–22, Y76, S157, D210, N215, 269–270, and 277–279; these read DDS, SR, and RNA.

The protein belongs to the SAM hydrolase / SAM-dependent halogenase family.

The catalysed reaction is fluoride + S-adenosyl-L-methionine = 5'-deoxy-5'-fluoroadenosine + L-methionine. Its activity is regulated as follows. Activity is not severely affected by most metal ions (Mg(2+), Mn(2+), Co(2+) and Fe(2+)), but both Cu(2+) and Zn(2+) are strong inhibitors. Functionally, catalyzes the formation of a C-F bond by combining S-adenosyl-L-methionine (SAM) and fluoride to generate 5'-fluoro-5'-deoxyadenosine (5'-FDA) and L-methionine. The polypeptide is Fluorinase (Actinopolyspora mzabensis).